The following is a 173-amino-acid chain: Co-chaperone protein HscB homolog (173 aa).

The region spanning 5 to 77 is the J domain; that stretch reads CHYALFDLQP…PRRARYLLAI (73 aa).

Belongs to the HscB family. In terms of assembly, interacts with HscA and stimulates its ATPase activity.

Co-chaperone involved in the maturation of iron-sulfur cluster-containing proteins. Seems to help targeting proteins to be folded toward HscA. In Pseudomonas putida (strain GB-1), this protein is Co-chaperone protein HscB homolog.